The chain runs to 241 residues: Proteasome subunit beta type-1 (241 aa).

Position 1 is an N-acetylmethionine (Met1). A propeptide spanning residues 1 to 28 is cleaved from the precursor; it reads MLSSTAMYSAPGRDLGMEPHRAAGPLQL. Residue Ser58 is glycosylated (O-linked (GlcNAc) serine). Phosphoserine is present on residues Ser62 and Ser68. Tyr150 carries the post-translational modification Phosphotyrosine. Ser162 is modified (phosphoserine). Lys204 bears the N6-acetyllysine mark. O-linked (GlcNAc) serine glycosylation is present at Ser209.

This sequence belongs to the peptidase T1B family. In terms of assembly, the 26S proteasome consists of a 20S proteasome core and two 19S regulatory subunits. The 20S proteasome core is a barrel-shaped complex made of 28 subunits that are arranged in four stacked rings. The two outer rings are each formed by seven alpha subunits, and the two inner rings are formed by seven beta subunits. The proteolytic activity is exerted by three beta-subunits PSMB5, PSMB6 and PSMB7. Interacts with SERPINB2. Interacts with RFPL4A. (Microbial infection) Interacts with HIV-1 protein Tat.

It is found in the cytoplasm. Its subcellular location is the nucleus. Non-catalytic component of the 20S core proteasome complex involved in the proteolytic degradation of most intracellular proteins. This complex plays numerous essential roles within the cell by associating with different regulatory particles. Associated with two 19S regulatory particles, forms the 26S proteasome and thus participates in the ATP-dependent degradation of ubiquitinated proteins. The 26S proteasome plays a key role in the maintenance of protein homeostasis by removing misfolded or damaged proteins that could impair cellular functions, and by removing proteins whose functions are no longer required. Associated with the PA200 or PA28, the 20S proteasome mediates ubiquitin-independent protein degradation. This type of proteolysis is required in several pathways including spermatogenesis (20S-PA200 complex) or generation of a subset of MHC class I-presented antigenic peptides (20S-PA28 complex). The protein is Proteasome subunit beta type-1 of Homo sapiens (Human).